A 392-amino-acid chain; its full sequence is Formate-dependent phosphoribosylglycinamide formyltransferase (392 aa).

N(1)-(5-phospho-beta-D-ribosyl)glycinamide-binding positions include Glu-22–Leu-23 and Glu-82. ATP contacts are provided by residues Arg-114, Lys-155, Ser-160–Gln-165, Glu-195–Val-198, and Glu-203. The ATP-grasp domain occupies Arg-119 to Leu-308. Residues Glu-267 and Glu-279 each coordinate Mg(2+). N(1)-(5-phospho-beta-D-ribosyl)glycinamide contacts are provided by residues Asp-286, Lys-355, and Arg-362–Arg-363.

This sequence belongs to the PurK/PurT family. Homodimer.

It carries out the reaction N(1)-(5-phospho-beta-D-ribosyl)glycinamide + formate + ATP = N(2)-formyl-N(1)-(5-phospho-beta-D-ribosyl)glycinamide + ADP + phosphate + H(+). Its pathway is purine metabolism; IMP biosynthesis via de novo pathway; N(2)-formyl-N(1)-(5-phospho-D-ribosyl)glycinamide from N(1)-(5-phospho-D-ribosyl)glycinamide (formate route): step 1/1. Involved in the de novo purine biosynthesis. Catalyzes the transfer of formate to 5-phospho-ribosyl-glycinamide (GAR), producing 5-phospho-ribosyl-N-formylglycinamide (FGAR). Formate is provided by PurU via hydrolysis of 10-formyl-tetrahydrofolate. The sequence is that of Formate-dependent phosphoribosylglycinamide formyltransferase from Salmonella paratyphi A (strain ATCC 9150 / SARB42).